The chain runs to 249 residues: LexA repressor (249 aa).

The tract at residues 1-25 (MAAAATGGRATSQPKKTTKGLTPRQ) is disordered. The H-T-H motif DNA-binding region spans 45-65 (MREIGDTVGLASLSSVTHQLS). Active-site for autocatalytic cleavage activity residues include Ser-173 and Lys-210.

It belongs to the peptidase S24 family. Homodimer.

It carries out the reaction Hydrolysis of Ala-|-Gly bond in repressor LexA.. Functionally, represses a number of genes involved in the response to DNA damage (SOS response), including recA and lexA. In the presence of single-stranded DNA, RecA interacts with LexA causing an autocatalytic cleavage which disrupts the DNA-binding part of LexA, leading to derepression of the SOS regulon and eventually DNA repair. This is LexA repressor from Pseudarthrobacter chlorophenolicus (strain ATCC 700700 / DSM 12829 / CIP 107037 / JCM 12360 / KCTC 9906 / NCIMB 13794 / A6) (Arthrobacter chlorophenolicus).